We begin with the raw amino-acid sequence, 616 residues long: Dihydroxy-acid dehydratase (616 aa).

Asp-81 is a binding site for Mg(2+). Residue Cys-122 participates in [2Fe-2S] cluster binding. Positions 123 and 124 each coordinate Mg(2+). Lys-124 bears the N6-carboxylysine mark. A [2Fe-2S] cluster-binding site is contributed by Cys-195. Position 491 (Glu-491) interacts with Mg(2+). Ser-517 functions as the Proton acceptor in the catalytic mechanism.

The protein belongs to the IlvD/Edd family. Homodimer. It depends on [2Fe-2S] cluster as a cofactor. Requires Mg(2+) as cofactor.

The catalysed reaction is (2R)-2,3-dihydroxy-3-methylbutanoate = 3-methyl-2-oxobutanoate + H2O. It catalyses the reaction (2R,3R)-2,3-dihydroxy-3-methylpentanoate = (S)-3-methyl-2-oxopentanoate + H2O. It participates in amino-acid biosynthesis; L-isoleucine biosynthesis; L-isoleucine from 2-oxobutanoate: step 3/4. Its pathway is amino-acid biosynthesis; L-valine biosynthesis; L-valine from pyruvate: step 3/4. Functionally, functions in the biosynthesis of branched-chain amino acids. Catalyzes the dehydration of (2R,3R)-2,3-dihydroxy-3-methylpentanoate (2,3-dihydroxy-3-methylvalerate) into 2-oxo-3-methylpentanoate (2-oxo-3-methylvalerate) and of (2R)-2,3-dihydroxy-3-methylbutanoate (2,3-dihydroxyisovalerate) into 2-oxo-3-methylbutanoate (2-oxoisovalerate), the penultimate precursor to L-isoleucine and L-valine, respectively. This is Dihydroxy-acid dehydratase from Escherichia fergusonii (strain ATCC 35469 / DSM 13698 / CCUG 18766 / IAM 14443 / JCM 21226 / LMG 7866 / NBRC 102419 / NCTC 12128 / CDC 0568-73).